Reading from the N-terminus, the 289-residue chain is 4-hydroxy-tetrahydrodipicolinate synthase (289 aa).

Thr-42 is a binding site for pyruvate. Tyr-129 serves as the catalytic Proton donor/acceptor. Lys-157 (schiff-base intermediate with substrate) is an active-site residue. Ile-198 is a binding site for pyruvate.

This sequence belongs to the DapA family. Homotetramer; dimer of dimers.

Its subcellular location is the cytoplasm. It catalyses the reaction L-aspartate 4-semialdehyde + pyruvate = (2S,4S)-4-hydroxy-2,3,4,5-tetrahydrodipicolinate + H2O + H(+). The protein operates within amino-acid biosynthesis; L-lysine biosynthesis via DAP pathway; (S)-tetrahydrodipicolinate from L-aspartate: step 3/4. In terms of biological role, catalyzes the condensation of (S)-aspartate-beta-semialdehyde [(S)-ASA] and pyruvate to 4-hydroxy-tetrahydrodipicolinate (HTPA). This Chlamydia caviae (strain ATCC VR-813 / DSM 19441 / 03DC25 / GPIC) (Chlamydophila caviae) protein is 4-hydroxy-tetrahydrodipicolinate synthase.